Reading from the N-terminus, the 340-residue chain is Holliday junction branch migration complex subunit RuvB (340 aa).

A large ATPase domain (RuvB-L) region spans residues 1–181; it reads MDRIVEIEKA…FGMQFRLNFY (181 aa). ATP is bound by residues Leu20, Arg21, Gly62, Lys65, Thr66, Thr67, 128–130, Arg171, Tyr181, and Arg218; that span reads EDF. Thr66 contributes to the Mg(2+) binding site. A small ATPAse domain (RuvB-S) region spans residues 182–252; it reads TSDELAKIVQ…RAKSSLDALG (71 aa). Positions 255–340 are head domain (RuvB-H); that stretch reads DLGFDEMDLK…TQKGLFDEDQ (86 aa). Positions 309 and 314 each coordinate DNA.

This sequence belongs to the RuvB family. In terms of assembly, homohexamer. Forms an RuvA(8)-RuvB(12)-Holliday junction (HJ) complex. HJ DNA is sandwiched between 2 RuvA tetramers; dsDNA enters through RuvA and exits via RuvB. An RuvB hexamer assembles on each DNA strand where it exits the tetramer. Each RuvB hexamer is contacted by two RuvA subunits (via domain III) on 2 adjacent RuvB subunits; this complex drives branch migration. In the full resolvosome a probable DNA-RuvA(4)-RuvB(12)-RuvC(2) complex forms which resolves the HJ.

It localises to the cytoplasm. The enzyme catalyses ATP + H2O = ADP + phosphate + H(+). Functionally, the RuvA-RuvB-RuvC complex processes Holliday junction (HJ) DNA during genetic recombination and DNA repair, while the RuvA-RuvB complex plays an important role in the rescue of blocked DNA replication forks via replication fork reversal (RFR). RuvA specifically binds to HJ cruciform DNA, conferring on it an open structure. The RuvB hexamer acts as an ATP-dependent pump, pulling dsDNA into and through the RuvAB complex. RuvB forms 2 homohexamers on either side of HJ DNA bound by 1 or 2 RuvA tetramers; 4 subunits per hexamer contact DNA at a time. Coordinated motions by a converter formed by DNA-disengaged RuvB subunits stimulates ATP hydrolysis and nucleotide exchange. Immobilization of the converter enables RuvB to convert the ATP-contained energy into a lever motion, pulling 2 nucleotides of DNA out of the RuvA tetramer per ATP hydrolyzed, thus driving DNA branch migration. The RuvB motors rotate together with the DNA substrate, which together with the progressing nucleotide cycle form the mechanistic basis for DNA recombination by continuous HJ branch migration. Branch migration allows RuvC to scan DNA until it finds its consensus sequence, where it cleaves and resolves cruciform DNA. The chain is Holliday junction branch migration complex subunit RuvB from Campylobacter hominis (strain ATCC BAA-381 / DSM 21671 / CCUG 45161 / LMG 19568 / NCTC 13146 / CH001A).